We begin with the raw amino-acid sequence, 172 residues long: Adenine phosphoribosyltransferase (172 aa).

This sequence belongs to the purine/pyrimidine phosphoribosyltransferase family. Homodimer.

Its subcellular location is the cytoplasm. It catalyses the reaction AMP + diphosphate = 5-phospho-alpha-D-ribose 1-diphosphate + adenine. It functions in the pathway purine metabolism; AMP biosynthesis via salvage pathway; AMP from adenine: step 1/1. Catalyzes a salvage reaction resulting in the formation of AMP, that is energically less costly than de novo synthesis. This chain is Adenine phosphoribosyltransferase, found in Crocosphaera subtropica (strain ATCC 51142 / BH68) (Cyanothece sp. (strain ATCC 51142)).